We begin with the raw amino-acid sequence, 146 residues long: Hemoglobin subunit beta (146 aa).

An N-acetylvaline modification is found at Val-1. The 145-residue stretch at 2–146 (HLTGEEKSAV…VANALAHKYH (145 aa)) folds into the Globin domain. Thr-12 carries the post-translational modification Phosphothreonine. Ser-44 bears the Phosphoserine mark. At Lys-59 the chain carries N6-acetyllysine. Position 63 (His-63) interacts with heme b. Lys-82 carries the N6-acetyllysine modification. His-92 is a binding site for heme b. The residue at position 93 (Cys-93) is an S-nitrosocysteine. At Lys-144 the chain carries N6-acetyllysine.

This sequence belongs to the globin family. Heterotetramer of two alpha chains and two beta chains. Red blood cells.

Involved in oxygen transport from the lung to the various peripheral tissues. The polypeptide is Hemoglobin subunit beta (HBB) (Leontocebus fuscicollis (Brown-mantled tamarin)).